A 266-amino-acid polypeptide reads, in one-letter code: Undecaprenyl-diphosphatase (266 aa).

A run of 8 helical transmembrane segments spans residues 1–21, 39–59, 83–103, 111–131, 149–169, 183–203, 218–238, and 246–266; these read MDTLQVIILALIQGLTEFLPI, QGLSFDVAVHIGSLAAVVIYF, SKLAWWIILATIPAIGVGFTA, LRGPGVIAITTVIFGLLLWFA, ALLIGVAQALALIPGTSRSGI, AAARFSFLMSIPVILGAALLM, ALALGSILSFIAAYACIYFFL, and MTPFVIYRIALGVFLCGFIYL.

It belongs to the UppP family.

The protein localises to the cell inner membrane. The catalysed reaction is di-trans,octa-cis-undecaprenyl diphosphate + H2O = di-trans,octa-cis-undecaprenyl phosphate + phosphate + H(+). Functionally, catalyzes the dephosphorylation of undecaprenyl diphosphate (UPP). Confers resistance to bacitracin. This chain is Undecaprenyl-diphosphatase, found in Shewanella amazonensis (strain ATCC BAA-1098 / SB2B).